The primary structure comprises 141 residues: MLQPKRTKYRKVQKGRMKGNSQRGHELSNGMFGIKSVHEDGMFLTSRQIEAARIAATRYMKREGQLWIKIFPDKPITKKPLEVRMGKGKGAVEYWAAVVKPGRIMFEVGGVPLSVAKEALRLAAQKLPVKTKFVVARDFEA.

The segment covering 1–17 (MLQPKRTKYRKVQKGRM) has biased composition (basic residues). Residues 1-29 (MLQPKRTKYRKVQKGRMKGNSQRGHELSN) are disordered.

The protein belongs to the universal ribosomal protein uL16 family. As to quaternary structure, part of the 50S ribosomal subunit.

Functionally, binds 23S rRNA and is also seen to make contacts with the A and possibly P site tRNAs. The protein is Large ribosomal subunit protein uL16 of Flavobacterium johnsoniae (strain ATCC 17061 / DSM 2064 / JCM 8514 / BCRC 14874 / CCUG 350202 / NBRC 14942 / NCIMB 11054 / UW101) (Cytophaga johnsonae).